A 512-amino-acid polypeptide reads, in one-letter code: Ribose import ATP-binding protein RbsA 2 (512 aa).

ABC transporter domains follow at residues 22 to 258 (LEMR…VGRD) and 263 to 512 (FPKV…TGNA). An ATP-binding site is contributed by 54 to 61 (GENGAGKS).

This sequence belongs to the ABC transporter superfamily. Ribose importer (TC 3.A.1.2.1) family. The complex is composed of an ATP-binding protein (RbsA), two transmembrane proteins (RbsC) and a solute-binding protein (RbsB).

The protein localises to the cell inner membrane. It carries out the reaction D-ribose(out) + ATP + H2O = D-ribose(in) + ADP + phosphate + H(+). Functionally, part of the ABC transporter complex RbsABC involved in ribose import. Responsible for energy coupling to the transport system. This chain is Ribose import ATP-binding protein RbsA 2, found in Rhizobium johnstonii (strain DSM 114642 / LMG 32736 / 3841) (Rhizobium leguminosarum bv. viciae).